A 379-amino-acid polypeptide reads, in one-letter code: Presenilin-associated rhomboid-like protein, mitochondrial (379 aa).

A mitochondrion-targeting transit peptide spans 1–52 (MAWRGWAQRGWGCGQAWGASVGGRSCEELTAVLTPPQLLGRRFNFFIQQKCG). At 53-101 (FRKAPRKVEPRRSDPGTSGEAYKRSALIPPVEETVFYPSPYPIRSLIKP) the chain is on the mitochondrial matrix side. Position 65 is a phosphoserine (Ser65). Thr69 is subject to Phosphothreonine. Ser70 carries the phosphoserine modification. The chain crosses the membrane as a helical span at residues 102–121 (LFFTVGFTGCAFGSAAIWQY). Residues 122–167 (ESLKSRVQSYFDGIKADWLDSIRPQKEGDFRKEINKWWNNLSDGQR) are Mitochondrial intermembrane-facing. Residues 168 to 187 (TVTGIIAANVLVFCLWRVPS) traverse the membrane as a helical segment. Residues 188–207 (LQRTMIRYFTSNPASKVLCS) are Mitochondrial matrix-facing. The helical transmembrane segment at 208–230 (PMLLSTFSHFSLFHMAANMYVLW) threads the bilayer. At 231–244 (SFSSSIVNILGQEQ) the chain is on the mitochondrial intermembrane side. Residues 245–262 (FMAVYLSAGVISNFVSYV) traverse the membrane as a helical segment. At 263-272 (GKVATGRYGP) the chain is on the mitochondrial matrix side. The helical transmembrane segment at 273–289 (SLGASGAIMTVLAAVCT) threads the bilayer. The active-site Nucleophile is the Ser277. Residues 290–295 (KIPEGR) lie on the Mitochondrial intermembrane side of the membrane. The chain crosses the membrane as a helical span at residues 296-318 (LAIIFLPMFTFTAGNALKAIIAM). Over 319–332 (DTAGMILGWKFFDH) the chain is Mitochondrial matrix. The helical transmembrane segment at 333–354 (AAHLGGALFGIWYVTYGHELIW) threads the bilayer. Residue His335 is part of the active site. The Mitochondrial intermembrane portion of the chain corresponds to 355–379 (KNREPLVKIWHEIRTNGPKKGGGSK).

It belongs to the peptidase S54 family. Interacts with PSEN1 and PSEN2. Binds OPA1. In terms of processing, P-beta is proteolytically processed (beta-cleavage) in a PARL-dependent manner. The cleavage is inhibited when residues Ser-65, Thr-69 and Ser-70 are all phosphorylated.

Its subcellular location is the mitochondrion inner membrane. It is found in the nucleus. It catalyses the reaction Cleaves type-1 transmembrane domains using a catalytic dyad composed of serine and histidine that are contributed by different transmembrane domains.. Functionally, required for the control of apoptosis during postnatal growth. Essential for proteolytic processing of an antiapoptotic form of OPA1 which prevents the release of mitochondrial cytochrome c in response to intrinsic apoptotic signals. Required for the maturation of PINK1 into its 52kDa mature form after its cleavage by mitochondrial-processing peptidase (MPP). Promotes cleavage of serine/threonine-protein phosphatase PGAM5 in damaged mitochondria in response to loss of mitochondrial membrane potential. Mediates differential cleavage of PINK1 and PGAM5 depending on the health status of mitochondria, disassociating from PINK1 and associating with PGAM5 in response to mitochondrial membrane potential loss. Required for processing of CLPB into a form with higher protein disaggregase activity by removing an autoinhibitory N-terminal peptide. Promotes processing of DIABLO/SMAC in the mitochondrion which is required for DIABLO apoptotic activity. Also required for cleavage of STARD7 and TTC19. Promotes changes in mitochondria morphology regulated by phosphorylation of P-beta domain. The sequence is that of Presenilin-associated rhomboid-like protein, mitochondrial (PARL) from Homo sapiens (Human).